An 85-amino-acid polypeptide reads, in one-letter code: MNYMVIISLALLVMTGVESVKDGYIADDRNCPYFCGRNAYCDGECKKNRAESGYCQWASKYGNACWCYKLPDDARIMKPGRCNGG.

An N-terminal signal peptide occupies residues 1–19; sequence MNYMVIISLALLVMTGVES. The 63-residue stretch at 21–83 folds into the LCN-type CS-alpha/beta domain; that stretch reads KDGYIADDRN…ARIMKPGRCN (63 aa). 4 cysteine pairs are disulfide-bonded: C31-C82, C35-C55, C41-C65, and C45-C67.

Belongs to the long (4 C-C) scorpion toxin superfamily. Sodium channel inhibitor family. Alpha subfamily. As to expression, expressed by the venom gland.

Its subcellular location is the secreted. Functionally, alpha toxins bind voltage-independently at site-3 of sodium channels (Nav) and inhibit the inactivation of the activated channels, thereby blocking neuronal transmission. Shows analgesic activity when intraperitoneally injected into mice. This is BmK AGP-SYPU2 from Olivierus martensii (Manchurian scorpion).